Here is a 158-residue protein sequence, read N- to C-terminus: F(420)H(2) dehydrogenase subunit C (158 aa).

This sequence belongs to the complex I 30 kDa subunit family. In terms of assembly, the FPO complex is composed of at least 13 different subunits.

It localises to the cell membrane. The catalysed reaction is methanophenazine + reduced coenzyme F420-(gamma-L-Glu)(n) = dihydromethanophenazine + oxidized coenzyme F420-(gamma-L-Glu)(n) + H(+). In terms of biological role, component of the F(420)H(2) dehydrogenase (FPO complex) which is part of the energy-conserving F(420)H(2):heterodisulfide oxidoreductase system. The membrane-bound electron transfer system of the complex plays an important role in the metabolism of methylotrophic methanogens when the organisms grow on methanol or methylamines. Catalyzes the oxidation of methanophenazine to dihydromethanophenazine. It shuttles electrons from F(420)H(2), via FAD and iron-sulfur (Fe-S) centers, to methanophenazine (an electron carrier in the membrane). It couples the redox reaction to proton translocation (for every two electrons transferred, two hydrogen ions are translocated across the cytoplasmic membrane), and thus conserves the redox energy in a proton gradient. It also catalyzes the oxidation of F(420)H(2) with quinones such as 2,3-dimethyl-1,4-naphthoquinone, 2-methyl-1,4-naphthoquinone and tetramethyl-p-benzoquinone. The polypeptide is F(420)H(2) dehydrogenase subunit C (fpoC) (Methanosarcina mazei (strain ATCC BAA-159 / DSM 3647 / Goe1 / Go1 / JCM 11833 / OCM 88) (Methanosarcina frisia)).